Consider the following 293-residue polypeptide: Ribosomal RNA small subunit methyltransferase H (293 aa).

Residues 32–34 (GGH), Asp51, Phe78, Asp99, and Gln106 each bind S-adenosyl-L-methionine. The tract at residues 272–293 (SDEEIKENPASRSAKLRVGRRI) is disordered.

It belongs to the methyltransferase superfamily. RsmH family.

The protein resides in the cytoplasm. It catalyses the reaction cytidine(1402) in 16S rRNA + S-adenosyl-L-methionine = N(4)-methylcytidine(1402) in 16S rRNA + S-adenosyl-L-homocysteine + H(+). Its function is as follows. Specifically methylates the N4 position of cytidine in position 1402 (C1402) of 16S rRNA. This chain is Ribosomal RNA small subunit methyltransferase H, found in Sulfurihydrogenibium sp. (strain YO3AOP1).